The sequence spans 84 residues: Small ribosomal subunit protein uS17 (84 aa).

Belongs to the universal ribosomal protein uS17 family. In terms of assembly, part of the 30S ribosomal subunit.

In terms of biological role, one of the primary rRNA binding proteins, it binds specifically to the 5'-end of 16S ribosomal RNA. This chain is Small ribosomal subunit protein uS17, found in Vibrio vulnificus (strain CMCP6).